Here is a 238-residue protein sequence, read N- to C-terminus: tRNA (guanine-N(7)-)-methyltransferase (238 aa).

S-adenosyl-L-methionine contacts are provided by Glu-68, Glu-93, Asp-120, and Asp-143. Residue Asp-143 is part of the active site. Residues Lys-147, Asp-179, and 216-219 contribute to the substrate site; that span reads TKFE.

The protein belongs to the class I-like SAM-binding methyltransferase superfamily. TrmB family.

It catalyses the reaction guanosine(46) in tRNA + S-adenosyl-L-methionine = N(7)-methylguanosine(46) in tRNA + S-adenosyl-L-homocysteine. It participates in tRNA modification; N(7)-methylguanine-tRNA biosynthesis. Catalyzes the formation of N(7)-methylguanine at position 46 (m7G46) in tRNA. This Shewanella denitrificans (strain OS217 / ATCC BAA-1090 / DSM 15013) protein is tRNA (guanine-N(7)-)-methyltransferase.